The following is a 551-amino-acid chain: Glucan 1,4-alpha-maltotetraohydrolase (551 aa).

An N-terminal signal peptide occupies residues 1–21 (MSHILRAAVLAAVLLPFPALA). Asp-22, Gln-23, His-34, Asp-37, and Glu-38 together coordinate Ca(2+). Residue 99–100 (YF) coordinates substrate. Asn-137 serves as a coordination point for Ca(2+). Position 138 (His-138) interacts with substrate. The cysteines at positions 161 and 171 are disulfide-linked. Asp-172 and Asp-175 together coordinate Ca(2+). 177-181 (FIGGE) is a binding site for substrate. Position 183 (Asp-183) interacts with Ca(2+). Arg-212 is a binding site for substrate. Asp-214 (nucleophile) is an active-site residue. Position 218 (Gly-218) interacts with Ca(2+). Residues Cys-237 and Cys-272 are joined by a disulfide bond. The active-site Proton donor is the Glu-240. Positions 314 and 326 each coordinate substrate. The CBM20 domain maps to 449–551 (GGEGGLVNVN…AAGASTSGSF (103 aa)).

Belongs to the glycosyl hydrolase 13 family. Monomer. Requires Ca(2+) as cofactor.

It localises to the secreted. It catalyses the reaction Hydrolysis of (1-&gt;4)-alpha-D-glucosidic linkages in amylaceous polysaccharides, to remove successive maltotetraose residues from the non-reducing chain ends.. It participates in glycan degradation; starch degradation. In Roseateles saccharophilus (Pseudomonas saccharophila), this protein is Glucan 1,4-alpha-maltotetraohydrolase (mta).